The following is a 442-amino-acid chain: Inhibitor of Apoptosis OPG037 (442 aa).

6 ANK repeats span residues 67-96 (DGNY…DPNA), 100-131 (HNKT…KINN), 203-233 (DGNT…DVNK), 237-267 (FGDS…VITD), 292-321 (YDST…ICED), and 323-347 (MYYA…SVDS).

Belongs to the orthopoxvirus OPG037 family. May interact with host caspase-9-Apaf-1 complex.

It localises to the host cytoplasm. Functionally, inhibits host apoptosis. Acts by associating with host apoptosome. This chain is Inhibitor of Apoptosis OPG037 (OPG037), found in Monkeypox virus.